The chain runs to 202 residues: MATLIYVDKENEEPGTLVATTDGLKLGSGPSIKALDGRSQVSISCFGKTFDAPTSLPKATRKALGTVNRATEKSVKTNGPLKQKQPSFSAKKMTEKTVKAKNSVPASDDAYPEIEKLFPFNPLGFESFDLPEEHQIAHLPLSGVPLMILDEERELEKLFQLGPPSPLKMPSPPWKSNLLQSPLSILLTLDVELPPVCSDIDI.

Positions 61 to 64 match the D-box motif; the sequence is RKAL. The short motif at 163–173 is the SH3-binding element; the sequence is PPSPLKMPSPP.

The protein belongs to the securin family.

It is found in the cytoplasm. The protein resides in the nucleus. The sequence is that of Putative pituitary tumor-transforming gene 3 protein (PTTG3) from Pan troglodytes (Chimpanzee).